The sequence spans 541 residues: Chaperonin GroEL (541 aa).

ATP is bound by residues 29-32 (TLGP), 86-90 (DGTTT), G413, and D494.

It belongs to the chaperonin (HSP60) family. In terms of assembly, forms a cylinder of 14 subunits composed of two heptameric rings stacked back-to-back. Interacts with the co-chaperonin GroES.

It is found in the cytoplasm. The enzyme catalyses ATP + H2O + a folded polypeptide = ADP + phosphate + an unfolded polypeptide.. In terms of biological role, together with its co-chaperonin GroES, plays an essential role in assisting protein folding. The GroEL-GroES system forms a nano-cage that allows encapsulation of the non-native substrate proteins and provides a physical environment optimized to promote and accelerate protein folding. This chain is Chaperonin GroEL, found in Acetivibrio thermocellus (strain ATCC 27405 / DSM 1237 / JCM 9322 / NBRC 103400 / NCIMB 10682 / NRRL B-4536 / VPI 7372) (Clostridium thermocellum).